The chain runs to 303 residues: Siderophore enterobactin esterase (303 aa).

This sequence belongs to the esterase D family. Homodimer.

The enzyme catalyses enterobactin + 3 H2O = 3 N-(2,3-dihydroxybenzoyl)-L-serine + 2 H(+). Its function is as follows. Displays specific enterobactin (ENB) esterase activity required for intracellular release of iron. Enterobactin is a xenosiderophore that is selectively produced by Gram-negative Enterobacteriaceae. The affinity for enterobactin is quite high, potentially due to the low natural abundance of this xenosiderophore in fungal habitats. Does not hydrolyze triacetylfusarinine C (TAFC). In Emericella nidulans (strain FGSC A4 / ATCC 38163 / CBS 112.46 / NRRL 194 / M139) (Aspergillus nidulans), this protein is Siderophore enterobactin esterase.